Consider the following 197-residue polypeptide: Ribosomal RNA large subunit methyltransferase E (197 aa).

Residues Gly-50, Trp-52, Asp-67, Asp-83, and Asp-111 each coordinate S-adenosyl-L-methionine. Lys-151 acts as the Proton acceptor in catalysis.

It belongs to the class I-like SAM-binding methyltransferase superfamily. RNA methyltransferase RlmE family.

Its subcellular location is the cytoplasm. It carries out the reaction uridine(2552) in 23S rRNA + S-adenosyl-L-methionine = 2'-O-methyluridine(2552) in 23S rRNA + S-adenosyl-L-homocysteine + H(+). Its function is as follows. Specifically methylates the uridine in position 2552 of 23S rRNA at the 2'-O position of the ribose in the fully assembled 50S ribosomal subunit. In Thermoplasma volcanium (strain ATCC 51530 / DSM 4299 / JCM 9571 / NBRC 15438 / GSS1), this protein is Ribosomal RNA large subunit methyltransferase E.